A 698-amino-acid polypeptide reads, in one-letter code: MNPLRSIQHNITTPPISGGQPLDAVGPQAQQSHPKRISPSQLSQSAHQALERLSANAEHQRLASLVRNALQDGTFQFQSSNHTQVTYKASICLPADTDTVRTDHLINNELTVQARLNDQSEYDIVSAHLHGSSKAISFDVPSPPPAHGSASSVLSERTHLGMSRVLSQDAVDSSSPLLSSPDHSRPPSQHIGSVRRDSDSLVSDNPVVQALLSFAQADQQFPTQAASIAGVQLEMRPRRDIEKALEEFKGAFTVEKAQLMSGANSSERVDEDVNADIHIPLLLKAIERGAAAFGPNALIGQNSAKAFLASCAPKITSNDDVLSEFINRKLKGDDDLQVRLGAQELLHVATKKEFQLGGLAGSIGVSSILGSAWELGASELLKNAIFGKNFSPSQYALQLAGIDSVPPLMIESMDTMCVLAIIKGMKGEEWSMSDLLPKALKAGAISSVVSFPNNVLQYAGFKSKVGDLAANSMTTEAAIFGAASGIPPEVKESEELMRAGLFQSMKDGVMAHPGEGADTKKTIERMTRHALDIAPGESTAVKSMGLASIVGMIPLIASNKATGLLSEQVLRIFRSTVFNPIEAIALNALALGGRVNVPGLFDSDNAKHARVVQTILARASQHMEAGDRDISAEELHQMLAPRSEFLRHVGSAIVNGMNASFEAIPALVRKLGYGEAPLAERIPYQDLAVPDTSRQPAP.

Residues 1–15 are compositionally biased toward polar residues; sequence MNPLRSIQHNITTPP. 2 disordered regions span residues 1–36 and 171–200; these read MNPLRSIQHNITTPPISGGQPLDAVGPQAQQSHPKR and VDSSSPLLSSPDHSRPPSQHIGSVRRDSDS. Low complexity predominate over residues 172 to 181; that stretch reads DSSSPLLSSP.

It localises to the secreted. Its function is as follows. Effector protein involved in non-host recognition. The protein is Effector protein AvrPphDPgy (avrPphDPgy) of Pseudomonas savastanoi pv. glycinea (Pseudomonas syringae pv. glycinea).